The primary structure comprises 82 residues: ATP synthase subunit c (82 aa).

The next 2 helical transmembrane spans lie at 7-27 and 53-73; these read LVALACGLIVGLGAIGASIGI and FILAGLIDAAFLIGVAIALLF.

The protein belongs to the ATPase C chain family. F-type ATPases have 2 components, F(1) - the catalytic core - and F(0) - the membrane proton channel. F(1) has five subunits: alpha(3), beta(3), gamma(1), delta(1), epsilon(1). F(0) has three main subunits: a(1), b(2) and c(10-14). The alpha and beta chains form an alternating ring which encloses part of the gamma chain. F(1) is attached to F(0) by a central stalk formed by the gamma and epsilon chains, while a peripheral stalk is formed by the delta and b chains.

The protein localises to the cell inner membrane. F(1)F(0) ATP synthase produces ATP from ADP in the presence of a proton or sodium gradient. F-type ATPases consist of two structural domains, F(1) containing the extramembraneous catalytic core and F(0) containing the membrane proton channel, linked together by a central stalk and a peripheral stalk. During catalysis, ATP synthesis in the catalytic domain of F(1) is coupled via a rotary mechanism of the central stalk subunits to proton translocation. Its function is as follows. Key component of the F(0) channel; it plays a direct role in translocation across the membrane. A homomeric c-ring of between 10-14 subunits forms the central stalk rotor element with the F(1) delta and epsilon subunits. The polypeptide is ATP synthase subunit c (Acidovorax ebreus (strain TPSY) (Diaphorobacter sp. (strain TPSY))).